We begin with the raw amino-acid sequence, 876 residues long: Alanine--tRNA ligase (876 aa).

The Zn(2+) site is built by H565, H569, C667, and H671.

It belongs to the class-II aminoacyl-tRNA synthetase family. Zn(2+) serves as cofactor.

Its subcellular location is the cytoplasm. It carries out the reaction tRNA(Ala) + L-alanine + ATP = L-alanyl-tRNA(Ala) + AMP + diphosphate. Functionally, catalyzes the attachment of alanine to tRNA(Ala) in a two-step reaction: alanine is first activated by ATP to form Ala-AMP and then transferred to the acceptor end of tRNA(Ala). Also edits incorrectly charged Ser-tRNA(Ala) and Gly-tRNA(Ala) via its editing domain. In Staphylococcus aureus (strain MSSA476), this protein is Alanine--tRNA ligase.